The sequence spans 246 residues: FAD synthetase (246 aa).

Belongs to the RibF family.

It carries out the reaction FMN + ATP + H(+) = FAD + diphosphate. Its pathway is cofactor biosynthesis; FAD biosynthesis; FAD from FMN: step 1/1. Functionally, catalyzes the adenylation of flavin mononucleotide (FMN) to form flavin adenine dinucleotide (FAD) coenzyme. Can also catalyze, with lower efficiency, the adenylation of the toxic riboflavin analogs 8-demethyl-8-aminoriboflavin mononucleotide (AFMN) and roseoflavin mononucleotide (RoFMN) to 8-demethyl-8-aminoriboflavin adenine dinucleotide (AFAD) and roseoflavin adenine dinucleotide (RoFAD), respectively. In Listeria monocytogenes serovar 1/2a (strain ATCC BAA-679 / EGD-e), this protein is FAD synthetase.